A 2339-amino-acid chain; its full sequence is Voltage-dependent N-type calcium channel subunit alpha-1B (2339 aa).

The Cytoplasmic portion of the chain corresponds to 1–90 (MVRFGDELGG…DNVVRKYAKR (90 aa)). The segment covering 15-34 (AGGAERARGGGAGGAGGPGP) has biased composition (gly residues). The tract at residues 15 to 37 (AGGAERARGGGAGGAGGPGPGGL) is disordered. Omega-N-methylarginine is present on Arg22. Residues 82 to 359 (NVVRKYAKRI…LVLGVLSGEF (278 aa)) form an I repeat. Residues 91–114 (ITEWPPFEYMILATIIANCIVLAL) traverse the membrane as a helical segment. The Extracellular segment spans residues 115–131 (EQHLPDGDKTPMSERLD). Residues 132–152 (DTEPYFIGIFCFEAGIKILAL) traverse the membrane as a helical segment. The Cytoplasmic portion of the chain corresponds to 153–163 (GFVLHKGSYLR). A helical membrane pass occupies residues 164–182 (NGWNVMDFVVVLTGILATA). At 183–187 (GTDFD) the chain is on the extracellular side. Residues 188–211 (LRTLRAVRVLRPLKLVSGIPSLQV) form a helical membrane-spanning segment. Topologically, residues 212 to 221 (VLKSIMKAMV) are cytoplasmic. A helical transmembrane segment spans residues 222–244 (PLLQIGLLLFFAILMFAIIGLEF). Residues 245–331 (YMGKFHKACF…NTNDAAGNTW (87 aa)) lie on the Extracellular side of the membrane. Asn256 is a glycosylation site (N-linked (GlcNAc...) asparagine). A helical membrane pass occupies residues 332 to 356 (NWLYFIPLIIIGSFFMLNLVLGVLS). Topologically, residues 357-483 (GEFAKERERV…FFIRRMVKAQ (127 aa)) are cytoplasmic. Residues 379 to 396 (QQIERELNGYLEWIFKAE) form a binding to the beta subunit region. Ser411 carries the phosphoserine modification. 452–459 (ASLKSGKT) provides a ligand contact to ATP. Residues 469–713 (EKMFRFFIRR…VFLAIAVDNL (245 aa)) form an II repeat. The helical transmembrane segment at 484 to 502 (SFYWTVLCVVALNTLCVAM) threads the bilayer. Over 503–512 (VHYNQPQRLT) the chain is Extracellular. A helical transmembrane segment spans residues 513 to 535 (TALYFAEFVFLGLFLTEMSLKMY). The Cytoplasmic segment spans residues 536-545 (GLGPRSYFRS). Ser545 is an a 1,2-diacyl-sn-glycero-3-phospho-(1D-myo-inositol-4,5-bisphosphate) binding site. The chain crosses the membrane as a helical span at residues 546–567 (SFNCFDFGVIVGSIFEVVWAAV). The Extracellular segment spans residues 568 to 574 (KPGTSFG). A helical membrane pass occupies residues 575-587 (ISVLRALRLLRIF). A 1,2-diacyl-sn-glycero-3-phospho-(1D-myo-inositol-4,5-bisphosphate) contacts are provided by Arg585 and Lys588. Residues 588 to 605 (KVTKYWNSLRNLVVSLLN) lie on the Cytoplasmic side of the membrane. A helical membrane pass occupies residues 606–631 (SMKSIISLLFLLFLFIVVFALLGMQL). Topologically, residues 632 to 683 (FGGQFNFKDETPTTNFDTFPAAILTVFQILTGEDWNAVMYHGIESQGGVSRG) are extracellular. Residues 684 to 710 (MFSSFYFIVLTLFGNYTLLNVFLAIAV) form a helical membrane-spanning segment. Over 711 to 1156 (DNLANAQELT…CCHYIVTMRY (446 aa)) the chain is Cytoplasmic. Residues Ser746, Ser749, and Ser784 each carry the phosphoserine modification. Composition is skewed to basic and acidic residues over residues 809-827 (DVKTHLDRPLVVEPGRDAP), 870-891 (EQDRAEALRAEGGELGPREERG), 927-937 (GSPEEAAEREP), 973-984 (CPREAESSEEPA), and 999-1026 (TAEKDKEAAEKGGEATEAEKDKEARNHQ). Disordered stretches follow at residues 809–1026 (DVKT…RNHQ) and 1056–1084 (VEEQPEDADNQRNVTRMGSQPPDTSTTVH). Positions 1066 to 1083 (QRNVTRMGSQPPDTSTTV) are enriched in polar residues. Ser1074 carries the phosphoserine modification. An III repeat occupies 1142 to 1424 (NLLRRCCHYI…IFVALIIITF (283 aa)). Residues 1157-1175 (FEMVILVVIALSSIALAAE) form a helical membrane-spanning segment. The Extracellular segment spans residues 1176-1183 (DPVRTDSP). A helical transmembrane segment spans residues 1184 to 1208 (RNNALKYMDYIFTGVFTFEMVIKMI). Residues 1209-1222 (DLGLLLHPGAYFRD) are Cytoplasmic-facing. Residues 1223–1243 (LWNILDFIVVSGALVAFAFSG) traverse the membrane as a helical segment. The Extracellular portion of the chain corresponds to 1244–1249 (SKGKDI). A helical membrane pass occupies residues 1250 to 1270 (STIKSLRVLRVLRPLKTIKRL). Over 1271-1288 (PKLKAVFDCVVNSLKNVL) the chain is Cytoplasmic. Residues 1289–1308 (NILIVYMLFMFIFAVIAVQL) form a helical membrane-spanning segment. Residues 1309–1395 (FKGKFFYCTD…EQGPSPGYRM (87 aa)) lie on the Extracellular side of the membrane. Residues 1396 to 1421 (ELSIFYVVYFVVFPFFFVNIFVALII) form a helical membrane-spanning segment. Residues 1422–1476 (ITFQEQGDKVMSECSLEKNERACIDFAISARPLTRYMPQNKQSFQYKTWTFVVSP) are Cytoplasmic-facing. Residues 1461–1714 (NKQSFQYKTW…LFVAVIMDNF (254 aa)) form an IV repeat. The helical transmembrane segment at 1477–1495 (PFEYFIMAMIALNTVVLMM) threads the bilayer. The Extracellular segment spans residues 1496-1503 (KFYDAPYE). The helical transmembrane segment at 1504–1528 (YELMLKCLNIVFTSMFSMECVLKII) threads the bilayer. Topologically, residues 1529–1538 (AFGVLNYFRD) are cytoplasmic. A helical membrane pass occupies residues 1539-1560 (AWNVFDFVTVLGSITDILVTEI). Residues 1561-1566 (ANNFIN) are Extracellular-facing. A glycan (N-linked (GlcNAc...) asparagine) is linked at Asn1566. The chain crosses the membrane as a helical span at residues 1567–1585 (LSFLRLFRAARLIKLLRQG). Over 1586 to 1604 (YTIRILLWTFVQSFKALPY) the chain is Cytoplasmic. Residues 1605-1624 (VCLLIAMLFFIYAIIGMQVF) traverse the membrane as a helical segment. The Extracellular portion of the chain corresponds to 1625–1686 (GNIALDDDTS…SNASECGSDF (62 aa)). N-linked (GlcNAc...) asparagine glycosylation occurs at Asn1678. A helical transmembrane segment spans residues 1687–1710 (AYFYFVSFIFLCSFLMLNLFVAVI). Topologically, residues 1711–2339 (MDNFEYLTRD…CHHPDRDRRC (629 aa)) are cytoplasmic. Residues 1727 to 1762 (HHLDEFIRVWAEYDPAACGRISYSDMFEMLKHMSPP) form the EF-hand domain. Positions 1740, 1746, and 1751 each coordinate Ca(2+). The tract at residues 1983–2312 (TLSGPDAEPQ…QPPPLRRVPN (330 aa)) is disordered. The segment covering 2050–2064 (PHHHHHRCHRRRDRK) has biased composition (basic residues). A Phosphoserine modification is found at Ser2067. Basic and acidic residues predominate over residues 2099–2136 (CRRERERRQERGRSQERRQPSSSSSEKHRFYSCDRFGG). Polar residues-rich tracts occupy residues 2144 to 2155 (PSLSSHPTSPTA) and 2165 to 2181 (GSGSVHGSPLLSTSGAS). 3 positions are modified to phosphoserine: Ser2224, Ser2233, and Ser2256. A compositionally biased stretch (low complexity) spans 2286-2302 (SNSGRSSRTSYVSSLTS).

Belongs to the calcium channel alpha-1 subunit (TC 1.A.1.11) family. CACNA1B subfamily. As to quaternary structure, multisubunit complex consisting of alpha-1, alpha-2, beta and delta subunits in a 1:1:1:1 ratio. The channel activity is directed by the pore-forming and voltage-sensitive alpha-1 subunit. In many cases, this subunit is sufficient to generate voltage-sensitive calcium channel activity. The auxiliary subunits beta and alpha-2/delta linked by a disulfide bridge regulate the channel activity. Interacts with RIMS1. Interacts with FMR1 (via C-terminus); this interaction induces a decrease in the number of presynaptic functional CACNA1B channels at the cell surface. Phosphorylated in vitro by CaM-kinase II, PKA, PKC and CGPK. In terms of tissue distribution, widespread expression throughout the brain. Highest levels in corpus striatum and midbrain.

Its subcellular location is the membrane. It catalyses the reaction Ca(2+)(in) = Ca(2+)(out). Is specifically blocked by omega-conotoxin GVIA. Is specifically blocked by omega-conotoxin MVIIA (ziconotide). Is insensitive to dihydropyridines (DHP). Functionally, voltage-sensitive calcium channels (VSCC) mediate the entry of calcium ions into excitable cells and are also involved in a variety of calcium-dependent processes, including muscle contraction, hormone or neurotransmitter release, gene expression, cell motility, cell division and cell death. This alpha-1B subunit gives rise to N-type calcium currents. N-type calcium channels belong to the 'high-voltage activated' (HVA) group. They are involved in pain signaling. Calcium channels containing alpha-1B subunit may play a role in directed migration of immature neurons. Mediates Ca(2+) release probability at hippocampal neuronal soma and synaptic terminals. The sequence is that of Voltage-dependent N-type calcium channel subunit alpha-1B (CACNA1B) from Oryctolagus cuniculus (Rabbit).